A 161-amino-acid polypeptide reads, in one-letter code: Nucleotide-binding protein Vapar_3769 (161 aa).

This sequence belongs to the YajQ family.

Functionally, nucleotide-binding protein. This is Nucleotide-binding protein Vapar_3769 from Variovorax paradoxus (strain S110).